The sequence spans 122 residues: Small ribosomal subunit protein uS13 (122 aa).

Residues 95-122 are disordered; sequence GLPVRGQRTHTNARTRKGPAKSIAGKKK.

Belongs to the universal ribosomal protein uS13 family. In terms of assembly, part of the 30S ribosomal subunit. Forms a loose heterodimer with protein S19. Forms two bridges to the 50S subunit in the 70S ribosome.

Functionally, located at the top of the head of the 30S subunit, it contacts several helices of the 16S rRNA. In the 70S ribosome it contacts the 23S rRNA (bridge B1a) and protein L5 of the 50S subunit (bridge B1b), connecting the 2 subunits; these bridges are implicated in subunit movement. Contacts the tRNAs in the A and P-sites. The protein is Small ribosomal subunit protein uS13 of Rhodopseudomonas palustris (strain BisB18).